Reading from the N-terminus, the 260-residue chain is MNKFLIIDGLNLVRRIYAAIPDENDMDSLTDRVSVACTKLLRIHHPTHVAIVWDGDEISWRKQLYPDYKKGRKPMPEPLAAGLSALQEHLKSLPIQSIYAAAEADDVIATLAMKTAKAQGEAVIVSTDKGFSQLNHPRISQWDHFNQQYLNIAELEQKLGVDRNQFLDLMALAGDSGNKIPGIAGIGPKSAAELLRTFRTLATLFSSLSNLGAKQAKKLAEGRDMARLSYKLAQLQTDLPLNINLRDFRVNGPANTQQAE.

Position 105 (D105) interacts with Mg(2+). Positions 164-259 (NQFLDLMALA…VNGPANTQQA (96 aa)) constitute a 5'-3' exonuclease domain. Residues L172, A173, P181, I183, and I186 each coordinate K(+). The segment at 185–190 (GIGPKS) is interaction with DNA.

The protein belongs to the Xni family. The cofactor is Mg(2+). It depends on K(+) as a cofactor.

Has flap endonuclease activity. During DNA replication, flap endonucleases cleave the 5'-overhanging flap structure that is generated by displacement synthesis when DNA polymerase encounters the 5'-end of a downstream Okazaki fragment. The sequence is that of Flap endonuclease Xni from Shewanella sp. (strain MR-4).